The sequence spans 393 residues: Lysophosphatidic acid receptor 1 (393 aa).

Residues M1 to K50 lie on the Extracellular side of the membrane. Intrachain disulfides connect C24–C190 and C188–C195. Residues N27 and N35 are each glycosylated (N-linked (GlcNAc...) asparagine). K39 is an a 1-acyl-sn-glycero-3-phosphate binding site. The helical transmembrane segment at L51 to Y75 threads the bilayer. Residues V76 to P83 are Cytoplasmic-facing. The helical transmembrane segment at I84 to F107 threads the bilayer. Residues N108 to W121 are Extracellular-facing. A helical transmembrane segment spans residues L122–I144. Position 124–129 (R124–D129) interacts with a 1-acyl-sn-glycero-3-phosphate. The Cytoplasmic portion of the chain corresponds to E145–R163. Residues V164–V184 form a helical membrane-spanning segment. At G185–D204 the chain is on the extracellular side. Residues S205 to Y225 traverse the membrane as a helical segment. W210 serves as a coordination point for a 1-acyl-sn-glycero-3-phosphate. At A226 to S255 the chain is on the cytoplasmic side. Residues L256–L280 traverse the membrane as a helical segment. The Extracellular portion of the chain corresponds to D281–K294. Residues C284 and C287 are joined by a disulfide bond. Residues F295–D315 form a helical membrane-spanning segment. Topologically, residues K316–V393 are cytoplasmic. A Phosphoserine modification is found at S341. Position 351 is a phosphothreonine (T351). Positions K369–Q381 are enriched in basic and acidic residues. Residues K369–V393 form a disordered region.

Belongs to the G-protein coupled receptor 1 family. Interacts with RALA and GRK2. Interacts with GNAQ and GNA13. Interacts with CD14; the interaction is enhanced by exposure to bacterial lipopolysaccharide (LPS). In terms of processing, N-glycosylated. As to expression, detected in brain cortex and in pituitary pars tuberalis.

Its subcellular location is the cell surface. The protein localises to the cell membrane. It localises to the endosome. Functionally, receptor for lysophosphatidic acid (LPA). Plays a role in the reorganization of the actin cytoskeleton, cell migration, differentiation and proliferation, and thereby contributes to the responses to tissue damage and infectious agents. Activates downstream signaling cascades via the G(i)/G(o), G(12)/G(13), and G(q) families of heteromeric G proteins. Signaling inhibits adenylyl cyclase activity and decreases cellular cAMP levels. Signaling triggers an increase of cytoplasmic Ca(2+) levels. Activates RALA; this leads to the activation of phospholipase C (PLC) and the formation of inositol 1,4,5-trisphosphate. Signaling mediates activation of down-stream MAP kinases. Contributes to the regulation of cell shape. Promotes Rho-dependent reorganization of the actin cytoskeleton in neuronal cells and neurite retraction. Promotes the activation of Rho and the formation of actin stress fibers. Promotes formation of lamellipodia at the leading edge of migrating cells via activation of RAC1. Through its function as LPA receptor, plays a role in chemotaxis and cell migration, including responses to injury and wounding. Plays a role in triggering inflammation in response to bacterial lipopolysaccharide (LPS) via its interaction with CD14. Promotes cell proliferation in response to LPA. Inhibits the intracellular ciliogenesis pathway in response to LPA and through AKT1 activation. Required for normal skeleton development. May play a role in osteoblast differentiation. Required for normal brain development. Required for normal proliferation, survival and maturation of newly formed neurons in the adult dentate gyrus. Plays a role in pain perception and in the initiation of neuropathic pain. The chain is Lysophosphatidic acid receptor 1 (LPAR1) from Ovis aries (Sheep).